A 357-amino-acid chain; its full sequence is RNA 3'-terminal phosphate cyclase (357 aa).

ATP-binding positions include glutamine 102 and 293 to 296; that span reads HMGD. The Tele-AMP-histidine intermediate role is filled by histidine 319.

Belongs to the RNA 3'-terminal cyclase family. Type 1 subfamily.

The protein resides in the cytoplasm. The catalysed reaction is a 3'-end 3'-phospho-ribonucleotide-RNA + ATP = a 3'-end 2',3'-cyclophospho-ribonucleotide-RNA + AMP + diphosphate. In terms of biological role, catalyzes the conversion of 3'-phosphate to a 2',3'-cyclic phosphodiester at the end of RNA. The mechanism of action of the enzyme occurs in 3 steps: (A) adenylation of the enzyme by ATP; (B) transfer of adenylate to an RNA-N3'P to produce RNA-N3'PP5'A; (C) and attack of the adjacent 2'-hydroxyl on the 3'-phosphorus in the diester linkage to produce the cyclic end product. The biological role of this enzyme is unknown but it is likely to function in some aspects of cellular RNA processing. The sequence is that of RNA 3'-terminal phosphate cyclase from Desulfurococcus amylolyticus (strain DSM 18924 / JCM 16383 / VKM B-2413 / 1221n) (Desulfurococcus kamchatkensis).